We begin with the raw amino-acid sequence, 176 residues long: Ribosome maturation factor RimM (176 aa).

Positions 93 to 166 (EGEYYHADLI…RVVIELPAEI (74 aa)) constitute a PRC barrel domain.

This sequence belongs to the RimM family. As to quaternary structure, binds ribosomal protein uS19.

The protein localises to the cytoplasm. Its function is as follows. An accessory protein needed during the final step in the assembly of 30S ribosomal subunit, possibly for assembly of the head region. Essential for efficient processing of 16S rRNA. May be needed both before and after RbfA during the maturation of 16S rRNA. It has affinity for free ribosomal 30S subunits but not for 70S ribosomes. The chain is Ribosome maturation factor RimM from Rhodopseudomonas palustris (strain BisB18).